A 119-amino-acid chain; its full sequence is Large ribosomal subunit protein bL12 (119 aa).

It belongs to the bacterial ribosomal protein bL12 family. Homodimer. Part of the ribosomal stalk of the 50S ribosomal subunit. Forms a multimeric L10(L12)X complex, where L10 forms an elongated spine to which 2 to 4 L12 dimers bind in a sequential fashion. Binds GTP-bound translation factors.

Its function is as follows. Forms part of the ribosomal stalk which helps the ribosome interact with GTP-bound translation factors. Is thus essential for accurate translation. This chain is Large ribosomal subunit protein bL12, found in Bacillus anthracis (strain A0248).